Reading from the N-terminus, the 453-residue chain is DDB1- and CUL4-associated factor 12 (453 aa).

Over residues 1–12 (MARKAVSRKRKA) the composition is skewed to basic residues. The tract at residues 1–26 (MARKAVSRKRKAPASPGAGSDAQGQQ) is disordered. Residues 1 to 38 (MARKAVSRKRKAPASPGAGSDAQGQQFGWDHTLHKRKR) are required for nuclear location and interaction with MOV10. Ser-15 bears the Phosphoserine mark. WD repeat units lie at residues 138 to 178 (QQGC…PVCV), 182 to 220 (GHKD…LTKS), 250 to 289 (PDNC…SKLL), and 338 to 375 (ERGS…FLEE).

The protein belongs to the WD repeat DCAF12 family. Component of the DCX(DCAF12) E3 ubiquitin ligase complex, at least composed of CUL4 (CUL4A or CUL4B), DDB1, DCAF12 and RBX1.

The protein resides in the cytoplasm. The protein localises to the cytoskeleton. Its subcellular location is the microtubule organizing center. It is found in the centrosome. It localises to the nucleus. It participates in protein modification; protein ubiquitination. In terms of biological role, substrate-recognition component of a DCX (DDB1-CUL4-X-box) E3 ubiquitin-protein ligase complex of the DesCEND (destruction via C-end degrons) pathway, which recognizes a C-degron located at the extreme C terminus of target proteins, leading to their ubiquitination and degradation. The C-degron recognized by the DesCEND pathway is usually a motif of less than ten residues and can be present in full-length proteins, truncated proteins or proteolytically cleaved forms. The DCX(DCAF12) complex specifically recognizes proteins with a diglutamate (Glu-Glu) at the C-terminus, such as MAGEA3, MAGEA6 and CCT5, leading to their ubiquitination and degradation. Ubiquitination of MAGEA3, MAGEA6 by DCX(DCAF12) complex is required for starvation-induced autophagy. Also directly recognizes the C-terminal glutamate-leucine (Glu-Leu) degron as an alternative degron in proteins such as MOV10, leading to their ubiquitination and degradation. Controls the protein level of MOV10 during spermatogenesis and in T cells, especially after their activation. The protein is DDB1- and CUL4-associated factor 12 (DCAF12) of Macaca fascicularis (Crab-eating macaque).